Here is a 143-residue protein sequence, read N- to C-terminus: Large ribosomal subunit protein uL11 (143 aa).

Belongs to the universal ribosomal protein uL11 family. In terms of assembly, part of the ribosomal stalk of the 50S ribosomal subunit. Interacts with L10 and the large rRNA to form the base of the stalk. L10 forms an elongated spine to which L12 dimers bind in a sequential fashion forming a multimeric L10(L12)X complex. One or more lysine residues are methylated.

Forms part of the ribosomal stalk which helps the ribosome interact with GTP-bound translation factors. In Azoarcus sp. (strain BH72), this protein is Large ribosomal subunit protein uL11.